We begin with the raw amino-acid sequence, 69 residues long: Toxin Lc b (69 aa).

Disulfide bonds link cysteine 3–cysteine 20, cysteine 13–cysteine 41, cysteine 45–cysteine 56, and cysteine 57–cysteine 62.

The protein belongs to the three-finger toxin family. Long-chain subfamily. Type II alpha-neurotoxin sub-subfamily. As to expression, expressed by the venom gland.

It is found in the secreted. Binds with high affinity to muscular nicotinic acetylcholine receptors (nAChRs), whereas it binds with a low affinity to neuronal alpha-7/CHRNA7 nAChRs. The sequence is that of Toxin Lc b from Laticauda colubrina (Yellow-lipped sea krait).